Reading from the N-terminus, the 442-residue chain is Tubby-related protein 3 (442 aa).

The required for association with the IFT complex A (IFT-A) stretch occupies residues 23 to 68 (MRQAKLDYQRLLLEKRQRKKRLEPFMVQPNPEARLRRAKPRASDEQ). The segment at 101 to 177 (PSVSSSVVEE…TSGSATAAQP (77 aa)) is disordered. Residues 145 to 162 (GISQSACLERPNSASSQN) are compositionally biased toward polar residues. The segment covering 163–175 (STDTGTSGSATAA) has biased composition (low complexity).

The protein belongs to the TUB family. As to quaternary structure, associates with the IFT complex A (IFT-A). Interacts with SIRT1. In terms of tissue distribution, expressed at high levels in testis, ovaries, thyroid, and spinal cord.

Its subcellular location is the nucleus. It localises to the cell membrane. It is found in the cell projection. The protein localises to the cilium. The protein resides in the cytoplasm. Its subcellular location is the secreted. Its function is as follows. Negative regulator of the Shh signaling transduction pathway: recruited to primary cilia via association with the IFT complex A (IFT-A) and is required for recruitment of G protein-coupled receptor GPR161 to cilia, a promoter of PKA-dependent basal repression machinery in Shh signaling. Binds to phosphorylated inositide (phosphoinositide) lipids. Both IFT-A- and phosphoinositide-binding properties are required to regulate ciliary G protein-coupled receptor trafficking. During adipogenesis, regulates ciliary trafficking of FFAR4 in preadipocytes. This chain is Tubby-related protein 3, found in Homo sapiens (Human).